A 143-amino-acid polypeptide reads, in one-letter code: Putative aryl-alcohol dehydrogenase AAD15 (143 aa).

This sequence belongs to the aldo/keto reductase family. Aldo/keto reductase 2 subfamily.

Its function is as follows. Putative aryl-alcohol dehydrogenase. This Saccharomyces cerevisiae (strain ATCC 204508 / S288c) (Baker's yeast) protein is Putative aryl-alcohol dehydrogenase AAD15 (AAD15).